The primary structure comprises 591 residues: MKKYPKIGIRPTIDGRQGGVRESLEDKTMNLAKAVAELISSNLKNGDGSPVECVIADSTIGRVAESAACAEKFEREGVGATITVTSCWCYGSETMDMHPHWPKAVWGFNGTERPGAVYLAAVLAGHAQKGLPAFGIYGHDVQDLDDNTIPADVAEKLLRFARAAMAVANMRGKSYLSFGSVCMGIAGSIVDPDFFQEYLGIRNESVDETEILRRMEEGIYDHEEYAKAMAWTEKYCKPNEGEDFKNRPEKRKTREEKDADWEFIVKMTIIMRDLMVGNPKLLEMGFKEEAIGHNAIAAGFQGQRQWTDWKPNGDFSEALLNTTFDWNGIREAYVLATENDACNGVAMLFGHLLSGCGQMFSDIRTYWSPEAVKRVTGKELTGMAKNGIIHLINSGATTLDATGESHNEAGEPCMKPNWEMTEADVEACLKATTWYPADRDYFRGGGFSSNFLSKGGMPVTMMRLNLVKGLGPVLQLAEGWTVDIDPEIHQVLNMRTDPTWPTTWFVPRLCDKPAFRDVYSVMNNWGANHGAISYGHIGQDLITLASMLRIPVCMHNVEDDKIFRPASWNAFGMDKEGSDYRACSTYGPIYK.

Catalysis depends on proton acceptor residues glutamate 338 and aspartate 362. Glutamate 338, aspartate 362, and histidine 529 together coordinate Mn(2+).

The protein belongs to the L-fucose isomerase family. It depends on Mn(2+) as a cofactor.

Its subcellular location is the cytoplasm. It carries out the reaction L-fucose = L-fuculose. It participates in carbohydrate degradation; L-fucose degradation; L-lactaldehyde and glycerone phosphate from L-fucose: step 1/3. Its function is as follows. Converts the aldose L-fucose into the corresponding ketose L-fuculose. This chain is L-fucose isomerase, found in Phocaeicola vulgatus (strain ATCC 8482 / DSM 1447 / JCM 5826 / CCUG 4940 / NBRC 14291 / NCTC 11154) (Bacteroides vulgatus).